Reading from the N-terminus, the 870-residue chain is S-linalool synthase (870 aa).

Residues Asp547, Asp551, Asn689, Ser693, and Glu697 each contribute to the Mg(2+) site. Positions 547 to 551 (DDFFD) match the DDXXD motif motif.

Belongs to the terpene synthase family. Mg(2+) is required as a cofactor. Mn(2+) serves as cofactor. Highly expressed in cells of the transmitting tract of the stigma and style and in the epidermal cells of petals, as well as in stamens.

The catalysed reaction is (2E)-geranyl diphosphate + H2O = (S)-linalool + diphosphate. Involved in the biosynthesis of the acyclic monoterpene S-linalool, a major component of the strong sweet scent of the C.breweri flowers. In Clarkia breweri (Fairy fans), this protein is S-linalool synthase (LIS).